A 202-amino-acid chain; its full sequence is dTTP/UTP pyrophosphatase (202 aa).

The active-site Proton acceptor is the Asp71.

Belongs to the Maf family. YhdE subfamily. It depends on a divalent metal cation as a cofactor.

The protein resides in the cytoplasm. It catalyses the reaction dTTP + H2O = dTMP + diphosphate + H(+). It carries out the reaction UTP + H2O = UMP + diphosphate + H(+). Functionally, nucleoside triphosphate pyrophosphatase that hydrolyzes dTTP and UTP. May have a dual role in cell division arrest and in preventing the incorporation of modified nucleotides into cellular nucleic acids. The sequence is that of dTTP/UTP pyrophosphatase from Zymomonas mobilis subsp. mobilis (strain ATCC 31821 / ZM4 / CP4).